We begin with the raw amino-acid sequence, 142 residues long: Translation initiation factor 2 subunit beta (142 aa).

It belongs to the eIF-2-beta/eIF-5 family. As to quaternary structure, heterotrimer composed of an alpha, a beta and a gamma chain.

EIF-2 functions in the early steps of protein synthesis by forming a ternary complex with GTP and initiator tRNA. The protein is Translation initiation factor 2 subunit beta of Staphylothermus marinus (strain ATCC 43588 / DSM 3639 / JCM 9404 / F1).